A 249-amino-acid polypeptide reads, in one-letter code: 5'-nucleotidase SurE (249 aa).

A divalent metal cation is bound by residues D8, D9, S39, and N91.

Belongs to the SurE nucleotidase family. It depends on a divalent metal cation as a cofactor.

Its subcellular location is the cytoplasm. The enzyme catalyses a ribonucleoside 5'-phosphate + H2O = a ribonucleoside + phosphate. Functionally, nucleotidase that shows phosphatase activity on nucleoside 5'-monophosphates. This chain is 5'-nucleotidase SurE, found in Ectopseudomonas mendocina (strain ymp) (Pseudomonas mendocina).